Reading from the N-terminus, the 310-residue chain is Protein-methionine-sulfoxide reductase catalytic subunit MsrP (310 aa).

The tat-type signal signal peptide spans 1–45; sequence MRKTSSPRIAPSEITPRDLYHDRRRFMQAAAGAAAAALWPHWLSA. Mo-molybdopterin-binding positions include Asn-73, 76 to 77, Cys-131, Thr-166, Asn-214, Arg-219, and 230 to 232; these read YE and SAK.

The protein belongs to the MsrP family. Heterodimer of a catalytic subunit (MsrP) and a heme-binding subunit (MsrQ). Mo-molybdopterin is required as a cofactor. Post-translationally, predicted to be exported by the Tat system. The position of the signal peptide cleavage has not been experimentally proven.

The protein resides in the periplasm. It carries out the reaction L-methionyl-[protein] + a quinone + H2O = L-methionyl-(S)-S-oxide-[protein] + a quinol. The enzyme catalyses L-methionyl-[protein] + a quinone + H2O = L-methionyl-(R)-S-oxide-[protein] + a quinol. Its function is as follows. Part of the MsrPQ system that repairs oxidized periplasmic proteins containing methionine sulfoxide residues (Met-O), using respiratory chain electrons. Thus protects these proteins from oxidative-stress damage caused by reactive species of oxygen and chlorine generated by the host defense mechanisms. MsrPQ is essential for the maintenance of envelope integrity under bleach stress, rescuing a wide series of structurally unrelated periplasmic proteins from methionine oxidation. The catalytic subunit MsrP is non-stereospecific, being able to reduce both (R-) and (S-) diastereoisomers of methionine sulfoxide. The protein is Protein-methionine-sulfoxide reductase catalytic subunit MsrP of Methylococcus capsulatus (strain ATCC 33009 / NCIMB 11132 / Bath).